Here is a 417-residue protein sequence, read N- to C-terminus: MLNNKIDFSKYDPKLWFAIEQEKKRQENHIELIASENYTSNYVMDVQGSQLTNKYAEGYPGKRYYGGCEYVDIIEELAIERAKKLFNADYANVQPHSGSQANFSVYTALLNPGDTILGMKLSHGGHLTHGSSVNFSGKMYNVISYGVDENGEINYEELLRLTKKYKPKMIIGGFSAYSGICNWKKMRFIADKADAYFVVDMAHVAGLVAAGIYPNPINYAHVVTSTTHKTLAGPRGGLILAKNGDDILYKKLNLSVFPGAQGGPLMHVIAAKAIAFKEALEPKFKTYQKQIVKNSKVMVERFLEKGYKIISGHTFNHLFLIDLTNKKITGKDADIILSKANITVNKNTIPNDLKSPFITSGIRIGTAAVTRRGFKENEVSKISDWITSILNNVDDHNNVLQIKKKVLEMCLKYPVYI.

(6S)-5,6,7,8-tetrahydrofolate-binding positions include leucine 121 and 125–127; that span reads GHL. N6-(pyridoxal phosphate)lysine is present on lysine 229. 355–357 contacts (6S)-5,6,7,8-tetrahydrofolate; that stretch reads SPF.

Belongs to the SHMT family. As to quaternary structure, homodimer. Pyridoxal 5'-phosphate serves as cofactor.

Its subcellular location is the cytoplasm. It catalyses the reaction (6R)-5,10-methylene-5,6,7,8-tetrahydrofolate + glycine + H2O = (6S)-5,6,7,8-tetrahydrofolate + L-serine. The protein operates within one-carbon metabolism; tetrahydrofolate interconversion. It functions in the pathway amino-acid biosynthesis; glycine biosynthesis; glycine from L-serine: step 1/1. Catalyzes the reversible interconversion of serine and glycine with tetrahydrofolate (THF) serving as the one-carbon carrier. This reaction serves as the major source of one-carbon groups required for the biosynthesis of purines, thymidylate, methionine, and other important biomolecules. Also exhibits THF-independent aldolase activity toward beta-hydroxyamino acids, producing glycine and aldehydes, via a retro-aldol mechanism. This is Serine hydroxymethyltransferase from Buchnera aphidicola subsp. Acyrthosiphon pisum (strain 5A).